The sequence spans 274 residues: tRNA-cytidine(32) 2-sulfurtransferase (274 aa).

The short motif at 40–45 is the PP-loop motif element; the sequence is SGGKDS. Cys115, Cys118, and Cys206 together coordinate [4Fe-4S] cluster.

This sequence belongs to the TtcA family. As to quaternary structure, homodimer. The cofactor is Mg(2+). Requires [4Fe-4S] cluster as cofactor.

It localises to the cytoplasm. It carries out the reaction cytidine(32) in tRNA + S-sulfanyl-L-cysteinyl-[cysteine desulfurase] + AH2 + ATP = 2-thiocytidine(32) in tRNA + L-cysteinyl-[cysteine desulfurase] + A + AMP + diphosphate + H(+). It functions in the pathway tRNA modification. Functionally, catalyzes the ATP-dependent 2-thiolation of cytidine in position 32 of tRNA, to form 2-thiocytidine (s(2)C32). The sulfur atoms are provided by the cysteine/cysteine desulfurase (IscS) system. This chain is tRNA-cytidine(32) 2-sulfurtransferase, found in Pseudomonas putida (strain ATCC 700007 / DSM 6899 / JCM 31910 / BCRC 17059 / LMG 24140 / F1).